Here is a 132-residue protein sequence, read N- to C-terminus: MVEAFCATWKLTNSQNFDEYMKALGVGFATRQVGNVTKPTVIISQEGDKVVIRTLSTFKNTEISFQLGEEFDETTADDRNCKSVVSLDGDKLVHIQKWDGKETNFVREIKDGKMVMTLTFGDVVAVRHYEKA.

Valine 2 bears the N-acetylvaline mark. 127-129 (RHY) lines the a fatty acid pocket.

It belongs to the calycin superfamily. Fatty-acid binding protein (FABP) family. Expressed in brain and other neural tissues.

It localises to the cytoplasm. B-FABP could be involved in the transport of a so far unknown hydrophobic ligand with potential morphogenic activity during CNS development. It is required for the establishment of the radial glial fiber system in developing brain, a system that is necessary for the migration of immature neurons to establish cortical layers. The protein is Fatty acid-binding protein, brain (FABP7) of Homo sapiens (Human).